The primary structure comprises 89 residues: MTKGTQSFGMRHNKSHTICRRCGKRSFHIQKSTCACCGYPAAKTRSYNWGAKAKRRRTTGTGRMSYLKKVHRSFKNGFRAGKPTSAATA.

The Zn(2+) site is built by cysteine 19, cysteine 22, cysteine 34, and cysteine 37. The segment at 19-37 adopts a C4-type zinc-finger fold; it reads CRRCGKRSFHIQKSTCACC.

Belongs to the eukaryotic ribosomal protein eL37 family. In terms of assembly, component of the large ribosomal subunit (LSU). Mature yeast ribosomes consist of a small (40S) and a large (60S) subunit. The 40S small subunit contains 1 molecule of ribosomal RNA (18S rRNA) and at least 33 different proteins. The large 60S subunit contains 3 rRNA molecules (25S, 5.8S and 5S rRNA) and at least 46 different proteins. Requires Zn(2+) as cofactor.

Its subcellular location is the cytoplasm. In terms of biological role, component of the ribosome, a large ribonucleoprotein complex responsible for the synthesis of proteins in the cell. The small ribosomal subunit (SSU) binds messenger RNAs (mRNAs) and translates the encoded message by selecting cognate aminoacyl-transfer RNA (tRNA) molecules. The large subunit (LSU) contains the ribosomal catalytic site termed the peptidyl transferase center (PTC), which catalyzes the formation of peptide bonds, thereby polymerizing the amino acids delivered by tRNAs into a polypeptide chain. The nascent polypeptides leave the ribosome through a tunnel in the LSU and interact with protein factors that function in enzymatic processing, targeting, and the membrane insertion of nascent chains at the exit of the ribosomal tunnel. The polypeptide is Large ribosomal subunit protein eL37A (rpl3703) (Schizosaccharomyces pombe (strain 972 / ATCC 24843) (Fission yeast)).